The sequence spans 495 residues: Meiosis-specific nuclear structural protein 1 (495 aa).

The interaction with BBOF1 stretch occupies residues 1–314 (MGSKRRNLSC…KLEEMLRQRE (314 aa)). Positions 28 to 410 (VQALKNVNSQ…QLEHRRAVEK (383 aa)) form a coiled coil. Y188 carries the phosphotyrosine modification.

This sequence belongs to the MNS1 family. As to quaternary structure, able to form oligomers. Microtubule inner protein component of sperm flagellar doublet microtubules. Interacts with ODAD1. Interacts with BBOF1. Expressed in nasal respiratory epithelium and in the sperm.

The protein localises to the nucleus. It is found in the cytoplasm. Its subcellular location is the cytoskeleton. The protein resides in the cilium axoneme. It localises to the flagellum axoneme. Microtubule inner protein (MIP) part of the dynein-decorated doublet microtubules (DMTs) in cilia axoneme, which is required for motile cilia beating. May play a role in the control of meiotic division and germ cell differentiation through regulation of pairing and recombination during meiosis. Required for sperm flagella assembly. May play a role in the assembly and function of the outer dynein arm-docking complex (ODA-DC). ODA-DC mediates outer dynein arms (ODA) binding onto the axonemal doublet microtubules. This chain is Meiosis-specific nuclear structural protein 1, found in Homo sapiens (Human).